The primary structure comprises 32 residues: APCTYPGQQCKSDDECCHGTCKTAFIGRICMR.

3 cysteine pairs are disulfide-bonded: cysteine 3–cysteine 17, cysteine 10–cysteine 21, and cysteine 16–cysteine 30.

Expressed by the venom gland.

The protein resides in the secreted. In terms of biological role, not toxic to mice by intracerebroventricular injection. This is U21-ctenitoxin-Co1a from Ctenus ornatus (Brazilian spider).